The chain runs to 261 residues: uncharacterized protein (261 aa).

An ATP-binding site is contributed by 41–48; it reads GKSGSGKS.

Belongs to the IIV-6 075L family.

This is an uncharacterized protein from Invertebrate iridescent virus 3 (IIV-3).